The following is a 204-amino-acid chain: uncharacterized protein (204 aa).

Residue H9 is the Tele-phosphohistidine intermediate of the active site. E86 serves as the catalytic Proton donor/acceptor.

The protein belongs to the phosphoglycerate mutase family.

This is an uncharacterized protein from Acanthamoeba polyphaga (Amoeba).